Here is a 354-residue protein sequence, read N- to C-terminus: Glycine betaine/proline betaine transport system permease protein ProW (354 aa).

The tract at residues 1–28 (MADQTNPWDTAQVADTTTQTADAWGTPA) is disordered. Residues 1-99 (MADQTNPWDT…VDYILNGFQQ (99 aa)) lie on the Cytoplasmic side of the membrane. Residues 9–23 (DTAQVADTTTQTADA) are compositionally biased toward low complexity. Residues 100-120 (LLLGMPAPVAIILFALIAWQV) traverse the membrane as a helical segment. S121 is a topological domain (periplasmic). Residues 122–142 (GVGMGIATLISLIAIGAIGAW) form a helical membrane-spanning segment. Topologically, residues 143–148 (SQAMIT) are cytoplasmic. Residues 145–324 (AMITLALVLT…ILAIILDRLT (180 aa)) enclose the ABC transmembrane type-1 domain. A helical membrane pass occupies residues 149–169 (LALVLTALLFCVVIGLPMGIW). Topologically, residues 170–198 (LARSPRAAKIVRPLLDAMQTTPAFVYLVP) are periplasmic. The helical transmembrane segment at 199-219 (IVMLFGIGNVPGVVVTIIFAL) threads the bilayer. The Cytoplasmic segment spans residues 220 to 270 (PPIVRLTILGINQVPADLIEASRSFGASPRQMLFKVQLPLAMPTIMAGVNQ). Residues 271–291 (TLMLALSMVVIASMIAVGGLG) traverse the membrane as a helical segment. Over 292–300 (QMVLRGIGR) the chain is Periplasmic. The helical transmembrane segment at 301 to 321 (LDMGLATVGGVGIVILAIILD) threads the bilayer. The Cytoplasmic portion of the chain corresponds to 322–354 (RLTQAVGRDSRSRGNRRWYTTGPVGLITRPFVK).

It belongs to the binding-protein-dependent transport system permease family. CysTW subfamily. In terms of assembly, the complex is composed of two ATP-binding proteins (ProV), two transmembrane proteins (ProW) and a solute-binding protein (ProX).

Its subcellular location is the cell inner membrane. Part of the ProU ABC transporter complex involved in glycine betaine and proline betaine uptake. Probably responsible for the translocation of the substrate across the membrane. In Salmonella typhimurium (strain LT2 / SGSC1412 / ATCC 700720), this protein is Glycine betaine/proline betaine transport system permease protein ProW.